We begin with the raw amino-acid sequence, 41 residues long: Large ribosomal subunit protein bL36 (41 aa).

Belongs to the bacterial ribosomal protein bL36 family.

The polypeptide is Large ribosomal subunit protein bL36 (Opitutus terrae (strain DSM 11246 / JCM 15787 / PB90-1)).